The chain runs to 116 residues: Large ribosomal subunit protein bL17 (116 aa).

This sequence belongs to the bacterial ribosomal protein bL17 family. Part of the 50S ribosomal subunit. Contacts protein L32.

The protein is Large ribosomal subunit protein bL17 of Synechocystis sp. (strain ATCC 27184 / PCC 6803 / Kazusa).